Consider the following 193-residue polypeptide: MRTAEIKRKTKETDITVRFSLDGSGKGTIHTGIPFFDHMLDSFTRHSRFDLDIQAIGDLEKGPHHTIEDIGIVLGQVFTHALGEGRGIQRFASVIVPMDESKAEVALDVGGRPYLVFEGSFSGPVEGVIESWLVRHFFESFIQNAKVTAHMNVSGFSDHHKCEALFKAFGVALHSATKIVYDDGQVPSTKGVL.

This sequence belongs to the imidazoleglycerol-phosphate dehydratase family.

It is found in the cytoplasm. The catalysed reaction is D-erythro-1-(imidazol-4-yl)glycerol 3-phosphate = 3-(imidazol-4-yl)-2-oxopropyl phosphate + H2O. It functions in the pathway amino-acid biosynthesis; L-histidine biosynthesis; L-histidine from 5-phospho-alpha-D-ribose 1-diphosphate: step 6/9. The sequence is that of Imidazoleglycerol-phosphate dehydratase from Methanospirillum hungatei JF-1 (strain ATCC 27890 / DSM 864 / NBRC 100397 / JF-1).